Consider the following 669-residue polypeptide: DNA ligase (669 aa).

NAD(+) contacts are provided by residues 34-38 (DAEYD), 83-84 (SL), and E114. Residue K116 is the N6-AMP-lysine intermediate of the active site. R137, E171, K287, and K311 together coordinate NAD(+). Zn(2+) is bound by residues C405, C408, C423, and C428. The BRCT domain maps to 591-669 (NVESYFAGKT…EERFLQELNK (79 aa)).

It belongs to the NAD-dependent DNA ligase family. LigA subfamily. Mg(2+) is required as a cofactor. Requires Mn(2+) as cofactor.

It catalyses the reaction NAD(+) + (deoxyribonucleotide)n-3'-hydroxyl + 5'-phospho-(deoxyribonucleotide)m = (deoxyribonucleotide)n+m + AMP + beta-nicotinamide D-nucleotide.. Functionally, DNA ligase that catalyzes the formation of phosphodiester linkages between 5'-phosphoryl and 3'-hydroxyl groups in double-stranded DNA using NAD as a coenzyme and as the energy source for the reaction. It is essential for DNA replication and repair of damaged DNA. The polypeptide is DNA ligase (Bacillus cereus (strain B4264)).